We begin with the raw amino-acid sequence, 136 residues long: Large ribosomal subunit protein uL16 (136 aa).

It belongs to the universal ribosomal protein uL16 family. Part of the 50S ribosomal subunit.

Binds 23S rRNA and is also seen to make contacts with the A and possibly P site tRNAs. The sequence is that of Large ribosomal subunit protein uL16 from Rickettsia africae (strain ESF-5).